A 137-amino-acid chain; its full sequence is Acetyltransferase Atu2258 (137 aa).

Residues 1 to 137 (MNFVLSDVAD…QSITWLEKRF (137 aa)) enclose the N-acetyltransferase domain. CoA-binding positions include 66-68 (LFV), glycine 74, and 108-110 (RTY).

In terms of biological role, catalyzes the transfer of an acetyl group from acetyl coenzyme A (AcCoA) to an acceptor substrate and releases both CoA and the acetylated product. It prefers glucosamine 6-phosphate or dopamine. It can also use the thialysine, N(8)-acetylspermidine, chloramphenicol, puromycin, polymyxin B, and 4-aminobutyrate ethyl ester. This chain is Acetyltransferase Atu2258, found in Agrobacterium fabrum (strain C58 / ATCC 33970) (Agrobacterium tumefaciens (strain C58)).